Reading from the N-terminus, the 282-residue chain is Bifunctional protein FolD (282 aa).

NADP(+) contacts are provided by residues 164–166 and serine 189; that span reads GRS.

Belongs to the tetrahydrofolate dehydrogenase/cyclohydrolase family. In terms of assembly, homodimer.

It catalyses the reaction (6R)-5,10-methylene-5,6,7,8-tetrahydrofolate + NADP(+) = (6R)-5,10-methenyltetrahydrofolate + NADPH. The catalysed reaction is (6R)-5,10-methenyltetrahydrofolate + H2O = (6R)-10-formyltetrahydrofolate + H(+). Its pathway is one-carbon metabolism; tetrahydrofolate interconversion. Its function is as follows. Catalyzes the oxidation of 5,10-methylenetetrahydrofolate to 5,10-methenyltetrahydrofolate and then the hydrolysis of 5,10-methenyltetrahydrofolate to 10-formyltetrahydrofolate. This is Bifunctional protein FolD from Lactobacillus helveticus (strain DPC 4571).